We begin with the raw amino-acid sequence, 466 residues long: Probable ribonuclease FAU-1 (466 aa).

The S1 motif domain occupies 90 to 152 (GAIYAGTVTD…TDGRPVLDTT (63 aa)).

Belongs to the FAU-1 family.

Its function is as follows. Probable RNase involved in rRNA stability through maturation and/or degradation of precursor rRNAs. Binds to RNA in loop regions with AU-rich sequences. The protein is Probable ribonuclease FAU-1 of Haloarcula marismortui (strain ATCC 43049 / DSM 3752 / JCM 8966 / VKM B-1809) (Halobacterium marismortui).